The primary structure comprises 270 residues: Tryptophan synthase alpha chain (270 aa).

Catalysis depends on proton acceptor residues glutamate 49 and aspartate 60.

This sequence belongs to the TrpA family. As to quaternary structure, tetramer of two alpha and two beta chains.

It catalyses the reaction (1S,2R)-1-C-(indol-3-yl)glycerol 3-phosphate + L-serine = D-glyceraldehyde 3-phosphate + L-tryptophan + H2O. It functions in the pathway amino-acid biosynthesis; L-tryptophan biosynthesis; L-tryptophan from chorismate: step 5/5. The alpha subunit is responsible for the aldol cleavage of indoleglycerol phosphate to indole and glyceraldehyde 3-phosphate. The sequence is that of Tryptophan synthase alpha chain from Buchnera aphidicola subsp. Melaphis rhois.